A 50-amino-acid polypeptide reads, in one-letter code: Protein PndA (50 aa).

A helical membrane pass occupies residues 5–25 (TFLMMLIVICVTILCFVWMVR).

Belongs to the Hok/Gef family.

The protein localises to the cell inner membrane. Toxic component of a type I toxin-antitoxin (TA) system. When expressed is involved in cellular Mg(2+) release and degradation of stable RNA. The chain is Protein PndA (pndA) from Escherichia coli.